Reading from the N-terminus, the 152-residue chain is uncharacterized protein (152 aa).

The next 3 membrane-spanning stretches (helical) occupy residues 13–33, 38–58, and 69–89; these read LLWFLLVPLVVYALLLLLLFF, LIVEAIPFCYGIALMMISLFM, and WVIFGRFVLVLVVLMLSFFVI.

Its subcellular location is the cell membrane. This is an uncharacterized protein from Mycoplasma pneumoniae (strain ATCC 29342 / M129 / Subtype 1) (Mycoplasmoides pneumoniae).